The primary structure comprises 807 residues: Leucine--tRNA ligase (807 aa).

The 'HIGH' region motif lies at 40 to 51; it reads PYPSGSGLHVGH. The 'KMSKS' region signature appears at 576-580; sequence KMSKS. Lys-579 provides a ligand contact to ATP.

The protein belongs to the class-I aminoacyl-tRNA synthetase family.

The protein localises to the cytoplasm. The catalysed reaction is tRNA(Leu) + L-leucine + ATP = L-leucyl-tRNA(Leu) + AMP + diphosphate. The polypeptide is Leucine--tRNA ligase (Chlorobaculum tepidum (strain ATCC 49652 / DSM 12025 / NBRC 103806 / TLS) (Chlorobium tepidum)).